The chain runs to 863 residues: Receptor-like protein 9DC1 (863 aa).

The N-terminal stretch at 1-21 (MGCVKLVFFMLYVFLFQLVSS) is a signal peptide. Residues 22 to 812 (SSLPHLCPED…EEDSPMISWQ (791 aa)) lie on the Extracellular side of the membrane. Residues 24 to 90 (LPHLCPEDQA…GVHCDETTGQ (67 aa)) form an N-cap region. Residues Asn-71 and Asn-108 are each glycosylated (N-linked (GlcNAc...) asparagine). An LRR 1; degenerate repeat occupies 91-114 (VIALDLRCSQLQGKFHSNSSLFQL). LRR repeat units lie at residues 115-138 (SNLKRLDLSNNNFIGSLISPKFGE) and 140-163 (SDLTHLDLSDSSFTGVIPSEISHL). Residues 164-190 (SKLHVLLIGDQYGLSIVPHNFEPLLKN) form an LRR 4; degenerate repeat. Asn-190, Asn-203, and Asn-211 each carry an N-linked (GlcNAc...) asparagine glycan. 6 LRR repeats span residues 191–213 (LTQLRELNLYEVNLSSTVPSNFS), 214–237 (SHLTTLQLSGTGLRGLLPERVFHL), 240–262 (LEFLDLSYNSQLMVRFPTTKWNS), 264–286 (ASLMKLYVHSVNIADRIPESFSH), 287–311 (LTSLHELDMGYTNLSGPIPKPLWNL), and 312–336 (TNIESLDLRYNHLEGPIPQLPIFEK). Residue Asn-261 is glycosylated (N-linked (GlcNAc...) asparagine). Asn-299 and Asn-310 each carry an N-linked (GlcNAc...) asparagine glycan. Residues 337-357 (LKKLSLFRNDNLDGGLEFLSF) form an LRR 11; degenerate repeat. LRR repeat units lie at residues 358–382 (NTQLERLDLSSNSLTGPIPSNISGL), 383–406 (QNLECLYLSSNHLNGSIPSWIFSL), 408–428 (SLVELDLSNNTFSGKIQEFKS), 429–452 (KTLSAVTLKQNKLKGRIPNSLLNQ), 454–476 (NLQLLLLSHNNISGHISSAICNL), 477–500 (KTLILLDLGSNNLEGTIPQCVVER), 502–524 (EYLSHLDLSKNRLSGTINTTFSV), 525–549 (GNILRVISLHGNKLTGKVPRSMINC), 551–572 (YLTLLDLGNNMLNDTFPNWLGY), 573–597 (LFQLKILSLRSNKLHGPIKSSGNTN), 599–623 (FMGLQILDLSSNGFSGNLPERILGN), 667–690 (LDSNMIINLSKNRFEGHIPSIIGD), 691–714 (LVGLRTLNLSHNVLEGHIPASFQN), 715–739 (LSVLESLDLSSNKISGEIPQQLASL), and 741–759 (FLEVLNLSHNHLVGCIPKG). Residues Asn-378, Asn-396, and Asn-416 are each glycosylated (N-linked (GlcNAc...) asparagine). An N-linked (GlcNAc...) asparagine glycan is attached at Asn-464. An N-linked (GlcNAc...) asparagine glycan is attached at Asn-519. Residue Asn-563 is glycosylated (N-linked (GlcNAc...) asparagine). Residues Asn-674, Asn-698, and Asn-714 are each glycosylated (N-linked (GlcNAc...) asparagine). Asn-746 and Asn-767 each carry an N-linked (GlcNAc...) asparagine glycan. The tract at residues 760-812 (KQFDSFGNTSYQGNDGLRGFPLSKLCGGEDQVTTPAELDQEEEEEDSPMISWQ) is C-cap/acidic domain. A helical transmembrane segment spans residues 813 to 833 (GVLVGYGCGLVIGLSVIYIMW). At 834–863 (STQYPAWFSRMDLKLEHIITTKMKKHKKRY) the chain is on the cytoplasmic side.

The protein belongs to the RLP family.

It localises to the cell membrane. Its function is as follows. Involved in plant defense. Confers resistance to the fungal pathogen C.fulvum through recognition of the AVR9 elicitor protein. The chain is Receptor-like protein 9DC1 from Solanum pimpinellifolium (Currant tomato).